Consider the following 295-residue polypeptide: 4-hydroxy-tetrahydrodipicolinate synthase (295 aa).

Thr-47 serves as a coordination point for pyruvate. Tyr-135 functions as the Proton donor/acceptor in the catalytic mechanism. The Schiff-base intermediate with substrate role is filled by Lys-163. Pyruvate is bound at residue Ile-206.

In terms of assembly, homodimer. In fact, exists in a monomer-dimer equilibrium in solution, shifted in favor of the dimer in presence of the substrate pyruvate; the monomer has significantly reduced activity compared with the dimer.

It localises to the cytoplasm. The enzyme catalyses L-aspartate 4-semialdehyde + pyruvate = (2S,4S)-4-hydroxy-2,3,4,5-tetrahydrodipicolinate + H2O + H(+). The protein operates within amino-acid biosynthesis; L-lysine biosynthesis via DAP pathway; (S)-tetrahydrodipicolinate from L-aspartate: step 3/4. Is insensitive to lysine-feedback inhibition. Shows ASA substrate inhibition. Catalyzes the condensation of (S)-aspartate-beta-semialdehyde [(S)-ASA] and pyruvate to 4-hydroxy-tetrahydrodipicolinate (HTPA). The polypeptide is 4-hydroxy-tetrahydrodipicolinate synthase (Staphylococcus aureus (strain MRSA252)).